A 589-amino-acid chain; its full sequence is V-type ATP synthase alpha chain 1 (589 aa).

Residue 239 to 246 (GPFGAGKT) participates in ATP binding.

Belongs to the ATPase alpha/beta chains family.

The enzyme catalyses ATP + H2O + 4 H(+)(in) = ADP + phosphate + 5 H(+)(out). Produces ATP from ADP in the presence of a proton gradient across the membrane. The V-type alpha chain is a catalytic subunit. This Treponema pallidum (strain Nichols) protein is V-type ATP synthase alpha chain 1 (atpA1).